The sequence spans 216 residues: Superoxide dismutase [Cu-Zn] 2, chloroplastic (216 aa).

Residues 1-62 constitute a chloroplast transit peptide; that stretch reads MAATNTILAF…APSKALTVVS (62 aa). 3 residues coordinate Cu cation: H108, H110, and H125. C119 and C208 are oxidised to a cystine. Positions 125, 133, 142, and 145 each coordinate Zn(2+). H182 provides a ligand contact to Cu cation.

This sequence belongs to the Cu-Zn superoxide dismutase family. As to quaternary structure, homotetramer. Cu cation is required as a cofactor. Requires Zn(2+) as cofactor. As to expression, expressed in leaves (at protein level). The spatial localization is regulated by miR398-mediated silencing. Mostly present in flowers, old rosette leaves and inflorescence, and, to a lower extent, in cauline leaves, stems and roots.

It localises to the plastid. Its subcellular location is the chloroplast. It carries out the reaction 2 superoxide + 2 H(+) = H2O2 + O2. In terms of biological role, destroys radicals which are normally produced within the cells and which are toxic to biological systems. Mediates tolerance to stress, including photo-oxidative stress. This is Superoxide dismutase [Cu-Zn] 2, chloroplastic (CSD2) from Arabidopsis thaliana (Mouse-ear cress).